A 181-amino-acid polypeptide reads, in one-letter code: Cytolethal distending toxin subunit C (181 aa).

Positions 1-15 are cleaved as a signal peptide; sequence MKKLAIVFTMLLIAG. A lipid anchor (N-palmitoyl cysteine) is attached at Cys-16. Residue Cys-16 is the site of S-diacylglycerol cysteine attachment. The Ricin B-type lectin domain occupies 79-181; the sequence is QSGWIMIRTP…NPLNTESPII (103 aa).

As to quaternary structure, heterotrimer of 3 subunits, CdtA, CdtB and CdtC.

It localises to the cell outer membrane. Its function is as follows. Part of the tripartite complex that is required for the CDT activity. CdtC, along with CdtA, probably forms a heterodimeric subunit required for the delivery of CdtB. The protein is Cytolethal distending toxin subunit C (cdtC) of Escherichia coli.